The following is a 204-amino-acid chain: Probable GTP-binding protein EngB (204 aa).

The EngB-type G domain occupies 22-197 (GFPEIAFVGR…LAEFDNVLSI (176 aa)). Residues 30-37 (GRSNVGKS), 57-61 (GKTRQ), 75-78 (DLPG), 144-147 (NKVD), and 176-178 (FSA) contribute to the GTP site. Ser-37 and Thr-59 together coordinate Mg(2+).

Belongs to the TRAFAC class TrmE-Era-EngA-EngB-Septin-like GTPase superfamily. EngB GTPase family. Mg(2+) serves as cofactor.

Its function is as follows. Necessary for normal cell division and for the maintenance of normal septation. The sequence is that of Probable GTP-binding protein EngB from Ruminiclostridium cellulolyticum (strain ATCC 35319 / DSM 5812 / JCM 6584 / H10) (Clostridium cellulolyticum).